The sequence spans 287 residues: 2-dehydro-3-deoxyphosphooctonate aldolase (287 aa).

The protein belongs to the KdsA family.

Its subcellular location is the cytoplasm. It catalyses the reaction D-arabinose 5-phosphate + phosphoenolpyruvate + H2O = 3-deoxy-alpha-D-manno-2-octulosonate-8-phosphate + phosphate. The protein operates within carbohydrate biosynthesis; 3-deoxy-D-manno-octulosonate biosynthesis; 3-deoxy-D-manno-octulosonate from D-ribulose 5-phosphate: step 2/3. Its pathway is bacterial outer membrane biogenesis; lipopolysaccharide biosynthesis. This chain is 2-dehydro-3-deoxyphosphooctonate aldolase, found in Rhodopseudomonas palustris (strain HaA2).